The primary structure comprises 534 residues: H(+)/hexose cotransporter 1 (534 aa).

Residues 1 to 21 (MAGGGVVVVSGRGLSTGDYRG) are Cytoplasmic-facing. Residues 22–42 (GLTVYVVMVAFMAACGGLLLG) form a helical membrane-spanning segment. The Extracellular segment spans residues 43–87 (YDNGVTGGVVSLEAFEKKFFPDVWAKKQEVHEDSPYCTYDNAKLQ). The chain crosses the membrane as a helical span at residues 88–108 (LFVSSLFLAGLVSCLFASWIT). Residues 109 to 114 (RNWGRK) are Cytoplasmic-facing. The chain crosses the membrane as a helical span at residues 115-135 (VTMGIGGAFFVAGGLVNAFAQ). The Extracellular segment spans residues 136–144 (DMAMLIVGR). The helical transmembrane segment at 145-165 (VLLGFGVGLGSQVVPQYLSEV) threads the bilayer. The Cytoplasmic portion of the chain corresponds to 166-173 (APFSHRGM). Residues 174-194 (LNIGYQLFVTIGILIAGLVNY) form a helical membrane-spanning segment. Over 195 to 204 (AVRDWENGWR) the chain is Extracellular. The chain crosses the membrane as a helical span at residues 205–225 (LSLGPAAAPGAILFLGSLVLP). Over 226 to 299 (ESPNFLVEKG…TSFVIQFFQQ (74 aa)) the chain is Cytoplasmic. The chain crosses the membrane as a helical span at residues 300-322 (FTGINAIIFYVPVLFSSLGSANS). The Extracellular portion of the chain corresponds to 323–328 (AALLNT). The chain crosses the membrane as a helical span at residues 329 to 349 (VVVGAVNVGSTLIAVMFSDKF). The Cytoplasmic portion of the chain corresponds to 350 to 352 (GRR). The chain crosses the membrane as a helical span at residues 353–373 (FLLIEGGIQCCLAMLTTGVVL). The Extracellular segment spans residues 374–387 (AIEFAKYGTDPLPK). Residues 388 to 408 (AVASGILAVICIFISGFAWSW) traverse the membrane as a helical segment. Topologically, residues 409–433 (GPMGWLIPSEIFTLETRPAGTAVAV) are cytoplasmic. The chain crosses the membrane as a helical span at residues 434–454 (VGNFLFSFVIGQAFVSMLCAM). At 455 to 456 (EY) the chain is on the extracellular side. A helical membrane pass occupies residues 457-477 (GVFLFFAGWLVIMVLCAIFLL). Over 478 to 534 (PETKGVPIERVQALYARHWFWNRVMGPAAAEVIAEDEKRVAAASAIIKEEELSKAMK) the chain is Cytoplasmic.

The protein belongs to the major facilitator superfamily. Sugar transporter (TC 2.A.1.1) family.

The protein resides in the membrane. In terms of biological role, active uptake of hexoses. The protein is H(+)/hexose cotransporter 1 (HUP1) of Parachlorella kessleri (Green alga).